The chain runs to 413 residues: Putative competence-damage inducible protein (413 aa).

It belongs to the CinA family.

The protein is Putative competence-damage inducible protein of Alkaliphilus oremlandii (strain OhILAs) (Clostridium oremlandii (strain OhILAs)).